Consider the following 276-residue polypeptide: Orotidine 5'-phosphate decarboxylase (276 aa).

The active-site Proton donor is the lysine 96.

It belongs to the OMP decarboxylase family. Type 2 subfamily.

The enzyme catalyses orotidine 5'-phosphate + H(+) = UMP + CO2. It participates in pyrimidine metabolism; UMP biosynthesis via de novo pathway; UMP from orotate: step 2/2. This Porphyromonas gingivalis (strain ATCC BAA-308 / W83) protein is Orotidine 5'-phosphate decarboxylase.